Consider the following 568-residue polypeptide: Archaeosine synthase subunit alpha (568 aa).

The PUA domain occupies 496-565 (YDALKSYWVK…AKKGVAVKVR (70 aa)).

This sequence belongs to the archaeosine synthase type 1 family. As to quaternary structure, forms a robust complex with the archaeosine synthase beta subunit RaSEA, likely an alpha(2)beta(2) heterotetrameric structure. Formation of this complex highly increases lysine transfer activity.

It catalyses the reaction 7-cyano-7-carbaguanosine(15) in tRNA + L-lysine = 7-N-[(5S)-5-amino-5-carboxypentyl]formamidino-7-deazaguanosine(15) in tRNA. Its pathway is tRNA modification; archaeosine-tRNA biosynthesis. Its function is as follows. Functions in the biosynthesis of archaeosine, a modified nucleoside present in the dihydrouridine loop (D-loop) of archaeal tRNAs. Catalyzes the addition of L-lysine to the cyano group of 7-cyano-7-deazaguanine (preQ0)-modified tRNAs at position 15, to generate q0kN15-tRNA, a q0N lysine adduct identified as 7-N-[(5S)-5-amino-5-carboxypentyl]formamidino-7-deazaguanosine. This Thermococcus kodakarensis (strain ATCC BAA-918 / JCM 12380 / KOD1) (Pyrococcus kodakaraensis (strain KOD1)) protein is Archaeosine synthase subunit alpha.